The chain runs to 114 residues: Transmembrane protein 14C (114 aa).

4 consecutive transmembrane segments (helical) span residues 8-28 (LVPL…GGII), 33-53 (AGSV…GLGS), 62-82 (NIWL…MRFY), and 87-107 (FMPA…LGIS).

It is found in the mitochondrion membrane. In terms of biological role, required for normal heme biosynthesis. The chain is Transmembrane protein 14C (TMEM14C) from Bos taurus (Bovine).